The chain runs to 300 residues: N-acetylmuramic acid 6-phosphate etherase (300 aa).

The region spanning 57–220 (VSAAFARQGR…SSAAMIRSGK (164 aa)) is the SIS domain. Glu-85 acts as the Proton donor in catalysis. Residue Glu-116 is part of the active site.

It belongs to the GCKR-like family. MurNAc-6-P etherase subfamily. As to quaternary structure, homodimer.

It carries out the reaction N-acetyl-D-muramate 6-phosphate + H2O = N-acetyl-D-glucosamine 6-phosphate + (R)-lactate. The protein operates within amino-sugar metabolism; N-acetylmuramate degradation. It participates in amino-sugar metabolism; 1,6-anhydro-N-acetylmuramate degradation. It functions in the pathway cell wall biogenesis; peptidoglycan recycling. Functionally, specifically catalyzes the cleavage of the D-lactyl ether substituent of MurNAc 6-phosphate, producing GlcNAc 6-phosphate and D-lactate. Together with AnmK, is also required for the utilization of anhydro-N-acetylmuramic acid (anhMurNAc) either imported from the medium or derived from its own cell wall murein, and thus plays a role in cell wall recycling. The protein is N-acetylmuramic acid 6-phosphate etherase of Edwardsiella ictaluri (strain 93-146).